Here is a 304-residue protein sequence, read N- to C-terminus: Aspartate carbamoyltransferase catalytic subunit (304 aa).

Carbamoyl phosphate contacts are provided by Arg49 and Thr50. Lys77 contacts L-aspartate. Residues Arg99, His127, and Gln130 each coordinate carbamoyl phosphate. Residues Arg160 and Arg211 each contribute to the L-aspartate site. 2 residues coordinate carbamoyl phosphate: Ala252 and Pro253.

Belongs to the aspartate/ornithine carbamoyltransferase superfamily. ATCase family. In terms of assembly, heterododecamer (2C3:3R2) of six catalytic PyrB chains organized as two trimers (C3), and six regulatory PyrI chains organized as three dimers (R2).

It carries out the reaction carbamoyl phosphate + L-aspartate = N-carbamoyl-L-aspartate + phosphate + H(+). The protein operates within pyrimidine metabolism; UMP biosynthesis via de novo pathway; (S)-dihydroorotate from bicarbonate: step 2/3. Functionally, catalyzes the condensation of carbamoyl phosphate and aspartate to form carbamoyl aspartate and inorganic phosphate, the committed step in the de novo pyrimidine nucleotide biosynthesis pathway. The protein is Aspartate carbamoyltransferase catalytic subunit of Bacillus mycoides (strain KBAB4) (Bacillus weihenstephanensis).